Here is an 80-residue protein sequence, read N- to C-terminus: Progonadoliberin-1 (80 aa).

A signal peptide spans 1-21 (MGIKRALWWMVVCVVVLQVSA). Q22 bears the Pyrrolidone carboxylic acid mark. At G31 the chain carries Glycine amide.

Belongs to the GnRH family.

It localises to the secreted. Functionally, stimulates the secretion of gonadotropins. The chain is Progonadoliberin-1 (gnrh1) from Clarias gariepinus (North African catfish).